The chain runs to 251 residues: Triosephosphate isomerase (251 aa).

Positions 12 and 14 each coordinate substrate. Histidine 96 acts as the Electrophile in catalysis. Residue glutamate 168 is the Proton acceptor of the active site.

This sequence belongs to the triosephosphate isomerase family. As to quaternary structure, homodimer.

It is found in the cytoplasm. Its subcellular location is the glycosome. It carries out the reaction D-glyceraldehyde 3-phosphate = dihydroxyacetone phosphate. The protein operates within carbohydrate biosynthesis; gluconeogenesis. It functions in the pathway carbohydrate degradation; glycolysis; D-glyceraldehyde 3-phosphate from glycerone phosphate: step 1/1. This chain is Triosephosphate isomerase, found in Leishmania mexicana.